The following is a 1125-amino-acid chain: Transient receptor potential cation channel subfamily A member 1 (1125 aa).

Residues 1–721 (MKRGLRRILL…KWCAYGFRAH (721 aa)) are Cytoplasmic-facing. 9 ANK repeats span residues 63–94 (ENLC…VLNI), 98–127 (YGNT…NPNL), 131–161 (NMMS…NINL), 165–194 (NGNT…KLCK), 198–227 (WGDY…KNGY), 239–268 (KKAS…HIDM), 272–301 (AKCM…GSSD), 309–338 (NQET…DINS), and 342–371 (EGRS…KVDI). 5 disulfides stabilise this stretch: Cys193/Cys666, Cys463/Cys666, Cys609/Cys622, Cys622/Cys666, and Cys634/Cys859. Pro395 bears the 4-hydroxyproline; transient mark. ANK repeat units follow at residues 413-442 (DGCT…SIHS), 446-475 (DKKS…DTRL), 482-511 (HGMT…LFLS), 514-543 (NGWT…KCTD), and 548-577 (EGNT…DILL). (E)-cinnamaldehyde contacts are provided by Cys415 and Cys422. Cys622 lines the (E)-cinnamaldehyde pocket. Cys634 bears the Cysteine sulfenic acid (-SOH); transient; in hyperoxia mark. Positions 642, 666, and 712 each coordinate (E)-cinnamaldehyde. The helical transmembrane segment at 722 to 742 (MMNLGSYCLGLIPMTLLVVKI) threads the bilayer. Over 743 to 767 (QPGMAFNSTGIINGTSSTHEERIDT) the chain is Extracellular. N-linked (GlcNAc...) asparagine glycans are attached at residues Asn749 and Asn755. A helical membrane pass occupies residues 768 to 788 (LNSFPIKICMILVFLSSIFGY). Topologically, residues 789 to 806 (CKEVIQIFQQKRNYFLDY) are cytoplasmic. Residues Glu791, Gln794, Asn808, and Glu811 each coordinate Ca(2+). Residues 807 to 827 (NNALEWVIYTTSIIFVLPLFL) form a helical membrane-spanning segment. Residues 828 to 832 (NIPAY) are Extracellular-facing. The helical transmembrane segment at 833–853 (MQWQCGAIAIFFYWMNFLLYL) threads the bilayer. At 854-876 (QRFENCGIFIVMLEVIFKTLLRS) the chain is on the cytoplasmic side. A Cysteine sulfenic acid (-SOH); transient; in hyperoxia modification is found at Cys859. A helical membrane pass occupies residues 877-897 (TGVFIFLLLAFGLSFYVLLNF). The Extracellular portion of the chain corresponds to 898 to 904 (QDAFSTP). The segment at residues 905–925 (LLSLIQTFSMMLGDINYRDAF) is an intramembrane region (pore-forming). Over 926–937 (LEPLFRNELAYP) the chain is Extracellular. A helical transmembrane segment spans residues 938–959 (VLTFGQLIAFTMFVPIVLMNLL). Over 960–1125 (IGLAVGDIAE…THCSISHPDF (166 aa)) the chain is Cytoplasmic. Residues 1044 to 1073 (MEILKQKYRLKDLTSLLEKQHELIKLIIQK) adopt a coiled-coil conformation. Position 1048-1054 (1048-1054 (KQKYRLK)) interacts with a 1,2-diacyl-sn-glycero-3-phospho-(1D-myo-inositol).

Belongs to the transient receptor (TC 1.A.4) family. In terms of assembly, homotetramer. Interacts with TMEM100. Interacts with EGLN1. Interacts with the scorpion wasabi receptor toxin at the same site that electrophiles but in a non-covalent manner. In terms of processing, TRPA1 activation by electrophiles occurs though covalent modification of specific cysteine residues in the N-terminal cytoplasmic domain. Post-translationally, hydroxylation is required for TRPA1 activity inhibition in normoxia. In hypoxia, the decrease in oxygen concentration diminishes the activity of the hydroxylase EGLN1, thus relieving TRPA1 from inhibition and ultimately leading to channel activation. Oxidation of Cys-634 and Cys-859 in hyperoxia may override the hydroxylase EGLN1-mediated inhibition, causing TRPA1 activation. Expressed in inner ear (at protein level). Specifically expressed in a subset of nociceptive neurons. Expressed in the same neurons that TRPV1. In contrast, it is not expressed in neurons expressing TRPM8. Expressed in the superior cervical ganglion of vagus nerve. Expressed in the inferior ganglion (nodose ganglion) of vagus nerve. Expressed in dorsal root ganglia neurons.

It is found in the cell membrane. It carries out the reaction Ca(2+)(in) = Ca(2+)(out). The catalysed reaction is Mg(2+)(in) = Mg(2+)(out). It catalyses the reaction Na(+)(in) = Na(+)(out). The enzyme catalyses K(+)(in) = K(+)(out). It carries out the reaction Zn(2+)(in) = Zn(2+)(out). With respect to regulation, electrophilic ligands activate the channel by covalent modification of intracellular cysteines. Cys-622 plays a key role in covalent binding of electrophiles. Extracellular Ca(2+) both potentiates and inactivates TRPA1; a rapid potentiation follows by slow desensitization. Activated by increase in intracellular Ca(2+) concentration. Inhibited by the potent blocker of TRPV channels ruthenium red, A-967079. Activated by icilin, sulfhydryl reactive agent MTSEA, N-methyl maleimide (NMM), and PF-4840154. Also activated by hyperoxia. Activated by intracellular Zn(2+). TRPA1 activation may critically depend on the presence of small intracellular compounds such as polyphosphates. Its function is as follows. Ligand-activated Ca(2+)-permeable, nonselective cation channel. Involved in pain detection and possibly also in cold perception, oxygen concentration perception, cough, itch, and inner ear function. Has a relatively high Ca(2+) selectivity, with a preference for divalent over monovalent cations (Ca(2+) &gt; Ba(2+) &gt; Mg(2+) &gt; NH4(+) &gt; Li(+) &gt; K(+)), the influx of cation into the cytoplasm, leads to membrane depolarization. Has a central role in the pain response to endogenous inflammatory mediators, such as bradykinin and to a diverse array of irritants. Activated by a large variety of structurally unrelated electrophilic and non-electrophilic chemical compounds, such as allylthiocyanate (AITC) from mustard oil or wasabi, cinnamaldehyde, diallyl disulfide (DADS) from garlic, and acrolein, an environmental irritant. Electrophilic ligands activate TRPA1 by interacting with critical N-terminal Cys residues in a covalent manner. Non-electrophile agonists bind at distinct sites in the transmembrane domain to promote channel activation. Also acts as an ionotropic cannabinoid receptor by being activated by delta(9)-tetrahydrocannabinol (THC), the psychoactive component of marijuana. May be a component for the mechanosensitive transduction channel of hair cells in inner ear, thereby participating in the perception of sounds. The sequence is that of Transient receptor potential cation channel subfamily A member 1 from Mus musculus (Mouse).